The primary structure comprises 172 residues: Large ribosomal subunit protein uL10 (172 aa).

Belongs to the universal ribosomal protein uL10 family. In terms of assembly, part of the ribosomal stalk of the 50S ribosomal subunit. The N-terminus interacts with L11 and the large rRNA to form the base of the stalk. The C-terminus forms an elongated spine to which L12 dimers bind in a sequential fashion forming a multimeric L10(L12)X complex.

Its function is as follows. Forms part of the ribosomal stalk, playing a central role in the interaction of the ribosome with GTP-bound translation factors. The chain is Large ribosomal subunit protein uL10 (rplJ) from Liberibacter africanus (Citrus greening disease).